The following is a 185-amino-acid chain: ATP synthase subunit b 2 (185 aa).

A disordered region spans residues 1–26 (MAQGHGDAKGTTAHTEAGGGHKAPFP). Residues 37-57 (LVSLAIAFVALYLIVSKIALP) form a helical membrane-spanning segment.

It belongs to the ATPase B chain family. F-type ATPases have 2 components, F(1) - the catalytic core - and F(0) - the membrane proton channel. F(1) has five subunits: alpha(3), beta(3), gamma(1), delta(1), epsilon(1). F(0) has three main subunits: a(1), b(2) and c(10-14). The alpha and beta chains form an alternating ring which encloses part of the gamma chain. F(1) is attached to F(0) by a central stalk formed by the gamma and epsilon chains, while a peripheral stalk is formed by the delta and b chains.

It localises to the cell inner membrane. Functionally, f(1)F(0) ATP synthase produces ATP from ADP in the presence of a proton or sodium gradient. F-type ATPases consist of two structural domains, F(1) containing the extramembraneous catalytic core and F(0) containing the membrane proton channel, linked together by a central stalk and a peripheral stalk. During catalysis, ATP synthesis in the catalytic domain of F(1) is coupled via a rotary mechanism of the central stalk subunits to proton translocation. Its function is as follows. Component of the F(0) channel, it forms part of the peripheral stalk, linking F(1) to F(0). The b'-subunit is a diverged and duplicated form of b found in plants and photosynthetic bacteria. This Rhodopseudomonas palustris (strain ATCC BAA-98 / CGA009) protein is ATP synthase subunit b 2 (atpF2).